Here is a 338-residue protein sequence, read N- to C-terminus: MASLHDLWFILVAVLFVGFFFLEGFDFGVGMATRFLGHNELERRVLINTIGPFWDANEVWLLTGAGAIFAAFPNWYATMLSGYYIPFVIVLLALMGRGVAFEFRGKVDHLKWVKVWDWVVFFGSLIPPFVLGVLFTTLFRGMPIDADMNIHAHVSDYINVYSILGGVTVTLLCFQHGLMFITLRTIGDLQNRARKMAQKIMGVVFVAVLAFAALSAYQTDMFTRRGEITIPLAVLIVICFMLAAVFIRKKKDGWTFGMTGAGLALTVGMIFISLFPRVMVSSLHSAYDLTVANASSGDYSLKVMSIAALTLLPFVIGSQIWSYYVFRKRVSHKEPMTY.

Transmembrane regions (helical) follow at residues 7–27 (LWFILVAVLFVGFFFLEGFDF), 50–70 (IGPFWDANEVWLLTGAGAIFA), 75–95 (WYATMLSGYYIPFVIVLLALM), 119–139 (VVFFGSLIPPFVLGVLFTTLF), 163–183 (ILGGVTVTLLCFQHGLMFITL), 196–216 (MAQKIMGVVFVAVLAFAALSA), 227–247 (EITIPLAVLIVICFMLAAVFI), 256–276 (FGMTGAGLALTVGMIFISLFP), and 306–326 (IAALTLLPFVIGSQIWSYYVF).

The protein belongs to the cytochrome ubiquinol oxidase subunit 2 family. Heterodimer of subunits I and II. Requires heme b as cofactor. It depends on heme d cis-diol as a cofactor.

The protein localises to the cell membrane. The catalysed reaction is 2 a ubiquinol + O2(in) + 4 H(+)(in) = 2 a ubiquinone + 2 H2O(in) + 4 H(+)(out). The sequence is that of Cytochrome bd ubiquinol oxidase subunit 2 (cydB) from Bacillus subtilis (strain 168).